The primary structure comprises 214 residues: Putative germin-like protein 9-2 (214 aa).

The signal sequence occupies residues 1–25 (MALSYYSLLLLLLAVWAPALTLVMA). 2 N-linked (GlcNAc...) asparagine glycosylation sites follow: Asn44 and Asn60. In terms of domain architecture, Cupin type-1 spans 56 to 202 (RKVFNTSSAP…SFKTDVPTIL (147 aa)). Positions 104, 106, 111, and 150 each coordinate Mn(2+).

It belongs to the germin family. Oligomer (believed to be a pentamer but probably hexamer).

Its subcellular location is the secreted. The protein resides in the extracellular space. The protein localises to the apoplast. In terms of biological role, may play a role in plant defense. Probably has no oxalate oxidase activity even if the active site is conserved. This is Putative germin-like protein 9-2 from Oryza sativa subsp. japonica (Rice).